The sequence spans 287 residues: Glutamate racemase (287 aa).

Residues 32 to 33 (DS) and 64 to 65 (YG) contribute to the substrate site. Cysteine 96 serves as the catalytic Proton donor/acceptor. 97 to 98 (NT) is a binding site for substrate. The active-site Proton donor/acceptor is the cysteine 208. 209–210 (TH) serves as a coordination point for substrate.

It belongs to the aspartate/glutamate racemases family.

It catalyses the reaction L-glutamate = D-glutamate. It participates in cell wall biogenesis; peptidoglycan biosynthesis. Provides the (R)-glutamate required for cell wall biosynthesis. The sequence is that of Glutamate racemase from Serratia proteamaculans (strain 568).